Here is a 398-residue protein sequence, read N- to C-terminus: Succinate--CoA ligase [ADP-forming] subunit beta (398 aa).

An ATP-grasp domain is found at 9 to 253 (MALLNERGVS…AGASDPLEQE (245 aa)). ATP contacts are provided by residues Lys-46, 53 to 55 (GRG), Val-111, and Glu-116. 2 residues coordinate Mg(2+): Asn-208 and Asp-222. Residues Asn-273 and 330 to 332 (GIM) contribute to the substrate site.

Belongs to the succinate/malate CoA ligase beta subunit family. Heterotetramer of two alpha and two beta subunits. It depends on Mg(2+) as a cofactor.

It catalyses the reaction succinate + ATP + CoA = succinyl-CoA + ADP + phosphate. It carries out the reaction GTP + succinate + CoA = succinyl-CoA + GDP + phosphate. It functions in the pathway carbohydrate metabolism; tricarboxylic acid cycle; succinate from succinyl-CoA (ligase route): step 1/1. Functionally, succinyl-CoA synthetase functions in the citric acid cycle (TCA), coupling the hydrolysis of succinyl-CoA to the synthesis of either ATP or GTP and thus represents the only step of substrate-level phosphorylation in the TCA. The beta subunit provides nucleotide specificity of the enzyme and binds the substrate succinate, while the binding sites for coenzyme A and phosphate are found in the alpha subunit. The protein is Succinate--CoA ligase [ADP-forming] subunit beta of Zymomonas mobilis subsp. mobilis (strain ATCC 31821 / ZM4 / CP4).